A 471-amino-acid chain; its full sequence is Probable multidrug-efflux transporter MT1670 (471 aa).

A run of 14 helical transmembrane segments spans residues 23–43 (IVLA…ISLL), 55–75 (LYAW…TTVN), 91–111 (LAVF…QILV), 116–136 (LQGI…NSTL), 146–166 (ALVS…GGLF), 174–194 (WAFG…PVAL), 213–233 (VPVW…VAAL), 237–257 (LVQT…FVVV), 279–299 (IYLT…VPLF), 308–328 (PVAA…GEVA), 337–357 (VIGH…ALGA), 366–386 (VGII…IGIA), 410–430 (AINV…GVVV), and 438–458 (VAAA…GVIA).

This sequence belongs to the major facilitator superfamily.

It is found in the cell membrane. Functionally, could be involved in fluoroquinolones efflux. This chain is Probable multidrug-efflux transporter MT1670, found in Mycobacterium tuberculosis (strain CDC 1551 / Oshkosh).